The primary structure comprises 267 residues: Tryptophan synthase alpha chain (267 aa).

Residues Glu49 and Asp60 each act as proton acceptor in the active site.

The protein belongs to the TrpA family. As to quaternary structure, tetramer of two alpha and two beta chains.

The catalysed reaction is (1S,2R)-1-C-(indol-3-yl)glycerol 3-phosphate + L-serine = D-glyceraldehyde 3-phosphate + L-tryptophan + H2O. It participates in amino-acid biosynthesis; L-tryptophan biosynthesis; L-tryptophan from chorismate: step 5/5. Its function is as follows. The alpha subunit is responsible for the aldol cleavage of indoleglycerol phosphate to indole and glyceraldehyde 3-phosphate. The polypeptide is Tryptophan synthase alpha chain (Pelobacter propionicus (strain DSM 2379 / NBRC 103807 / OttBd1)).